A 414-amino-acid chain; its full sequence is 2,3-diketo-5-methylthiopentyl-1-phosphate enolase (414 aa).

Lys99 functions as the Proton acceptor in the catalytic mechanism. Substrate contacts are provided by residues Lys148, 174-177, His265, Gly338, and 360-361; these read KDDE and GG. Residues Lys174, Asp176, and Glu177 each contribute to the Mg(2+) site. Lys174 bears the N6-carboxylysine mark.

Belongs to the RuBisCO large chain family. Type IV subfamily. In terms of assembly, homodimer. Mg(2+) is required as a cofactor.

It catalyses the reaction 5-methylsulfanyl-2,3-dioxopentyl phosphate = 2-hydroxy-5-methylsulfanyl-3-oxopent-1-enyl phosphate. It participates in amino-acid biosynthesis; L-methionine biosynthesis via salvage pathway; L-methionine from S-methyl-5-thio-alpha-D-ribose 1-phosphate: step 3/6. In terms of biological role, catalyzes the enolization of 2,3-diketo-5-methylthiopentyl-1-phosphate (DK-MTP-1-P) into 2-hydroxy-3-keto-5-methylthiopentenyl-1-phosphate (HK-MTPenyl-1-P). This Bacillus cereus (strain AH187) protein is 2,3-diketo-5-methylthiopentyl-1-phosphate enolase.